The primary structure comprises 347 residues: NADH-ubiquinone oxidoreductase chain 2 (347 aa).

9 helical membrane-spanning segments follow: residues 3–23 (PLALSLILTTLFTGTLITMMS), 59–79 (YFMTQATASMMLMMALTINLM), 93–115 (VASNVALMALMTKLGSAPFHFWV), 150–170 (NTNLIYLSGLLSILIGGWGGL), 178–198 (ILAYSSISHMGWMLIILPFNP), 200–220 (LTLLNLAIYILLTLSIFMILA), 240–260 (MTIMLMTTLLSLGGLPPLSGF), 274–294 (NSIIMPLTMAIMTLLNMYFYT), and 326–346 (LPTLITLSNMLLPLTPMISML).

This sequence belongs to the complex I subunit 2 family. Core subunit of respiratory chain NADH dehydrogenase (Complex I) which is composed of 45 different subunits. Interacts with TMEM242.

It localises to the mitochondrion inner membrane. It carries out the reaction a ubiquinone + NADH + 5 H(+)(in) = a ubiquinol + NAD(+) + 4 H(+)(out). Its function is as follows. Core subunit of the mitochondrial membrane respiratory chain NADH dehydrogenase (Complex I) which catalyzes electron transfer from NADH through the respiratory chain, using ubiquinone as an electron acceptor. Essential for the catalytic activity and assembly of complex I. In Elephas maximus (Indian elephant), this protein is NADH-ubiquinone oxidoreductase chain 2.